The chain runs to 365 residues: Alanine racemase (365 aa).

Residue K32 is the Proton acceptor; specific for D-alanine of the active site. K32 carries the post-translational modification N6-(pyridoxal phosphate)lysine. R128 serves as a coordination point for substrate. Y257 serves as the catalytic Proton acceptor; specific for L-alanine. M305 contacts substrate.

Belongs to the alanine racemase family. Pyridoxal 5'-phosphate serves as cofactor.

It carries out the reaction L-alanine = D-alanine. It functions in the pathway amino-acid biosynthesis; D-alanine biosynthesis; D-alanine from L-alanine: step 1/1. Functionally, catalyzes the interconversion of L-alanine and D-alanine. May also act on other amino acids. The sequence is that of Alanine racemase (alr) from Francisella philomiragia subsp. philomiragia (strain ATCC 25017 / CCUG 19701 / FSC 153 / O#319-036).